The primary structure comprises 165 residues: UPF0303 protein Bcep18194_A4700 (165 aa).

This sequence belongs to the UPF0303 family.

This is UPF0303 protein Bcep18194_A4700 from Burkholderia lata (strain ATCC 17760 / DSM 23089 / LMG 22485 / NCIMB 9086 / R18194 / 383).